A 94-amino-acid polypeptide reads, in one-letter code: MNKGELVDAVAEKASVTKKQADAVLTAALETIIEAVSSGDKVTLVGFGSFESRERKAREGRNPKTNEKMEIPATRVPAFSAGKLFREKVAPPKA.

It belongs to the bacterial histone-like protein family. In terms of assembly, homodimer.

Its function is as follows. Histone-like DNA-binding protein which is capable of wrapping DNA to stabilize it, and thus to prevent its denaturation under extreme environmental conditions. It is essential for heterocyst differentiation. This Nostoc sp. (strain PCC 7120 / SAG 25.82 / UTEX 2576) protein is DNA-binding protein HU (hup).